The sequence spans 748 residues: MDNDDINNNNNNNNNNNNNNNSQELDQQEQTQEEITKQRIQKRKEEAKRIMEERKKREQQPPSQRQYEDVEDDQQQQPIRPIKQLPQRQQQYDDNDEPPQQQQYEPKISQRKVPLPPMKQPTTSSTASAATGSILSPSSNFREDMVKKAVLFLNNPNVKNTALARKVAYLEKKGLTSDEVKEALKRVETGNINGSSTNNSNITQSNSISRTRNDNYGNNNNNSSNNNNNIQQQQYYQQQQQQHQQQQQMALTQIQSYQKRLEADDQRIAQLMMNNNRFSWNSFLFSVTAIVGAASGLAYLTSNYIIPFLNGGKTNKDASANMDKKITSLQEEIIKLQSTIIQQGNDFRESTKSLKTLIEQQQQQILQQQQINSVSTTTNSATSASNSSEIVEIKKELKNLINLIGNKENSNNSNNNSNNSNNNNGYSKYNGFNGVYNKSSYDDVSTNNNNKTNSPPSPNKPTTTTTTTATSTPGSNISNTNKTLPPIIKTNPYSHLSWKLPTDQPPVIPSWQQKSSNPPSDLSNANDKSSPSNSNPSTPTKPYQSSFNYGDVNSFVGGSNTLNFDEKPTTTTTTSTTPSNERPSSPSVNNNNNNNNNNNNNNNNNNNNNNNTTIASTSNESNNSKVETTSNDSDKSTSPSSSSNNTTSTTATTTTITSASTEDNKQQSDETPYSSDFLDVINQLKQGKTPPGIRTDIDDKPLENSTVTKSAKERPKKPWERDTLTSVTNNLSVEETQTINNTDSSVEK.

2 disordered regions span residues 1–138 (MDND…LSPS) and 190–228 (GNINGSSTNNSNITQSNSISRTRNDNYGNNNNNSSNNNN). Residues 1-277 (MDNDDINNNN…IAQLMMNNNR (277 aa)) lie on the Peroxisomal side of the membrane. A compositionally biased stretch (low complexity) spans 7-30 (NNNNNNNNNNNNNNNSQELDQQEQ). Residues 8 to 60 (NNNNNNNNNNNNNNSQELDQQEQTQEEITKQRIQKRKEEAKRIMEERKKREQQ) are a coiled coil. Basic and acidic residues predominate over residues 43–59 (RKEEAKRIMEERKKREQ). Residues 86-104 (PQRQQQYDDNDEPPQQQQY) are compositionally biased toward polar residues. Composition is skewed to low complexity over residues 122-131 (TTSSTASAAT), 190-209 (GNINGSSTNNSNITQSNSIS), and 218-228 (NNNNNSSNNNN). The stretch at 241 to 277 (QQHQQQQQMALTQIQSYQKRLEADDQRIAQLMMNNNR) forms a coiled coil. A helical transmembrane segment spans residues 278 to 300 (FSWNSFLFSVTAIVGAASGLAYL). Topologically, residues 301–748 (TSNYIIPFLN…INNTDSSVEK (448 aa)) are cytoplasmic. Positions 316–413 (KDASANMDKK…IGNKENSNNS (98 aa)) form a coiled coil. Disordered stretches follow at residues 406 to 673 (NKEN…ETPY) and 685 to 748 (KQGK…SVEK). Composition is skewed to low complexity over residues 409-424 (NSNNSNNNSNNSNNNN) and 445-476 (STNNNNKTNSPPSPNKPTTTTTTTATSTPGSN). Polar residues predominate over residues 510–527 (SWQQKSSNPPSDLSNAND). 2 stretches are compositionally biased toward low complexity: residues 528 to 542 (KSSPSNSNPSTPTKP) and 569 to 611 (TTTT…NNNN). The segment covering 612–627 (TTIASTSNESNNSKVE) has biased composition (polar residues). Residues 628–661 (TTSNDSDKSTSPSSSSNNTTSTTATTTTITSAST) show a composition bias toward low complexity. Over residues 710–723 (SAKERPKKPWERDT) the composition is skewed to basic and acidic residues. A compositionally biased stretch (polar residues) spans 724–748 (LTSVTNNLSVEETQTINNTDSSVEK).

It belongs to the peroxin-14 family. As to quaternary structure, interacts with PEX13; forming the PEX13-PEX14 docking complex. Interacts with PEX5 (via WxxxF/Y motifs).

The protein localises to the peroxisome membrane. Component of the PEX13-PEX14 docking complex, a translocon channel that specifically mediates the import of peroxisomal cargo proteins bound to PEX5 receptor. The PEX13-PEX14 docking complex forms a large import pore which can be opened to a diameter of about 9 nm. Mechanistically, PEX5 receptor along with cargo proteins associates with the PEX14 subunit of the PEX13-PEX14 docking complex in the cytosol, leading to the insertion of the receptor into the organelle membrane with the concomitant translocation of the cargo into the peroxisome matrix. The chain is Peroxisomal membrane protein PEX14 (pex14) from Dictyostelium discoideum (Social amoeba).